A 364-amino-acid chain; its full sequence is Aminomethyltransferase (364 aa).

The protein belongs to the GcvT family. The glycine cleavage system is composed of four proteins: P, T, L and H.

It catalyses the reaction N(6)-[(R)-S(8)-aminomethyldihydrolipoyl]-L-lysyl-[protein] + (6S)-5,6,7,8-tetrahydrofolate = N(6)-[(R)-dihydrolipoyl]-L-lysyl-[protein] + (6R)-5,10-methylene-5,6,7,8-tetrahydrofolate + NH4(+). The glycine cleavage system catalyzes the degradation of glycine. The sequence is that of Aminomethyltransferase from Escherichia coli O127:H6 (strain E2348/69 / EPEC).